Consider the following 906-residue polypeptide: Alanine--tRNA ligase (906 aa).

Residues His-600, His-604, Cys-703, and His-707 each coordinate Zn(2+).

It belongs to the class-II aminoacyl-tRNA synthetase family. Homodimer. Zn(2+) serves as cofactor.

The protein localises to the cytoplasm. The enzyme catalyses tRNA(Ala) + L-alanine + ATP = L-alanyl-tRNA(Ala) + AMP + diphosphate. Functionally, catalyzes the attachment of alanine to tRNA(Ala) in a two-step reaction: alanine is first activated by ATP to form Ala-AMP and then transferred to the acceptor end of tRNA(Ala). Incorrectly charged aminoacyl-tRNA(Ala) is also edited in situ by the editing domain. The polypeptide is Alanine--tRNA ligase (alaS) (Archaeoglobus fulgidus (strain ATCC 49558 / DSM 4304 / JCM 9628 / NBRC 100126 / VC-16)).